The primary structure comprises 985 residues: Probable oxidoreductase YjgC (985 aa).

A 2Fe-2S ferredoxin-type domain is found at 3–79 (GKKTITINGV…GDVIDTLSPD (77 aa)). [2Fe-2S] cluster-binding residues include cysteine 37, cysteine 48, cysteine 51, and cysteine 63. Residues 79 to 119 (DVKKAQVIGMDKILYNHELYCTVCDYNNGGCEIHNTVKEMK) enclose the 4Fe-4S His(Cys)3-ligated-type domain. Residues histidine 95, cysteine 99, cysteine 102, cysteine 109, cysteine 148, cysteine 151, cysteine 154, cysteine 158, cysteine 191, cysteine 194, cysteine 197, cysteine 201, cysteine 265, cysteine 268, cysteine 272, and cysteine 300 each coordinate [4Fe-4S] cluster. 2 consecutive 4Fe-4S ferredoxin-type domains span residues 139 to 170 (PFYRYDPDQCILCGRCVEACQDVQVTETLTID) and 182 to 211 (NDVPINESSCVSCGHCSTVCPCNAMMEKGM). The 4Fe-4S Mo/W bis-MGD-type domain occupies 258 to 314 (IKKTKTVCTYCGVGCSFDVWTKGRDILKVEPQEEAPANGISTCVKGKFGWDFVNSEE).

The protein in the C-terminal section; belongs to the prokaryotic molybdopterin-containing oxidoreductase family. It depends on [2Fe-2S] cluster as a cofactor. [4Fe-4S] cluster serves as cofactor. The cofactor is Mo-bis(molybdopterin guanine dinucleotide).

This is Probable oxidoreductase YjgC (yjgC) from Bacillus subtilis (strain 168).